Here is a 100-residue protein sequence, read N- to C-terminus: Aspartyl/glutamyl-tRNA(Asn/Gln) amidotransferase subunit C (100 aa).

The protein belongs to the GatC family. As to quaternary structure, heterotrimer of A, B and C subunits.

The catalysed reaction is L-glutamyl-tRNA(Gln) + L-glutamine + ATP + H2O = L-glutaminyl-tRNA(Gln) + L-glutamate + ADP + phosphate + H(+). It catalyses the reaction L-aspartyl-tRNA(Asn) + L-glutamine + ATP + H2O = L-asparaginyl-tRNA(Asn) + L-glutamate + ADP + phosphate + 2 H(+). Functionally, allows the formation of correctly charged Asn-tRNA(Asn) or Gln-tRNA(Gln) through the transamidation of misacylated Asp-tRNA(Asn) or Glu-tRNA(Gln) in organisms which lack either or both of asparaginyl-tRNA or glutaminyl-tRNA synthetases. The reaction takes place in the presence of glutamine and ATP through an activated phospho-Asp-tRNA(Asn) or phospho-Glu-tRNA(Gln). The chain is Aspartyl/glutamyl-tRNA(Asn/Gln) amidotransferase subunit C from Streptococcus pyogenes serotype M18 (strain MGAS8232).